The sequence spans 413 residues: Ribulose bisphosphate carboxylase large chain (413 aa).

2 residues coordinate substrate: asparagine 100 and threonine 150. The active-site Proton acceptor is lysine 152. A substrate-binding site is contributed by lysine 154. Residues lysine 178, aspartate 180, and glutamate 181 each coordinate Mg(2+). Lysine 178 is modified (N6-carboxylysine). Histidine 271 (proton acceptor) is an active-site residue. Residues arginine 272, histidine 304, and serine 356 each coordinate substrate.

It belongs to the RuBisCO large chain family. Type I subfamily. Heterohexadecamer of 8 large chains and 8 small chains; disulfide-linked. The disulfide link is formed within the large subunit homodimers. Requires Mg(2+) as cofactor. Post-translationally, the disulfide bond which can form in the large chain dimeric partners within the hexadecamer appears to be associated with oxidative stress and protein turnover.

It is found in the plastid. The protein resides in the chloroplast. The enzyme catalyses 2 (2R)-3-phosphoglycerate + 2 H(+) = D-ribulose 1,5-bisphosphate + CO2 + H2O. The catalysed reaction is D-ribulose 1,5-bisphosphate + O2 = 2-phosphoglycolate + (2R)-3-phosphoglycerate + 2 H(+). Functionally, ruBisCO catalyzes two reactions: the carboxylation of D-ribulose 1,5-bisphosphate, the primary event in carbon dioxide fixation, as well as the oxidative fragmentation of the pentose substrate in the photorespiration process. Both reactions occur simultaneously and in competition at the same active site. The protein is Ribulose bisphosphate carboxylase large chain (rbcL) of Adiantum pedatum (Northern maidenhair fern).